A 439-amino-acid polypeptide reads, in one-letter code: 23S rRNA (uracil(1939)-C(5))-methyltransferase RlmD (439 aa).

In terms of domain architecture, TRAM spans 10-68 (QKKLRAAFTTIVQDLDYQGLGVAKIQGKTWFIENALPQEQVQVQVIEEKRQYGLGRVQK). Residues cysteine 81, cysteine 87, cysteine 90, and cysteine 168 each coordinate [4Fe-4S] cluster. Positions 271, 300, 305, 321, 348, and 369 each coordinate S-adenosyl-L-methionine. Residue cysteine 395 is the Nucleophile of the active site.

Belongs to the class I-like SAM-binding methyltransferase superfamily. RNA M5U methyltransferase family. RlmD subfamily.

The enzyme catalyses uridine(1939) in 23S rRNA + S-adenosyl-L-methionine = 5-methyluridine(1939) in 23S rRNA + S-adenosyl-L-homocysteine + H(+). In terms of biological role, catalyzes the formation of 5-methyl-uridine at position 1939 (m5U1939) in 23S rRNA. The polypeptide is 23S rRNA (uracil(1939)-C(5))-methyltransferase RlmD (Histophilus somni (strain 129Pt) (Haemophilus somnus)).